A 301-amino-acid chain; its full sequence is Hydroxymycolate synthase MmaA4 (301 aa).

S-adenosyl-L-methionine is bound by residues 42–43 (YS), 81–83 (GCG), 103–108 (TLSKNQ), 132–133 (WE), and I145. C278 is a catalytic residue.

It belongs to the CFA/CMAS family. Monomer.

It participates in lipid metabolism; mycolic acid biosynthesis. Its activity is regulated as follows. Inhibited by S-adenosyl-N-decyl-aminoethyl (SADAE). Involved in the biosynthesis of hydroxymycolate, a common precursor of oxygenated mycolic acids (methoxy-mycolate and keto-mycolate). Probably transfers a methyl group from the S-adenosylmethionine (SAM) cofactor and, subsequently or simultaneously, a water molecule onto the double bound of ethylene substrates, leading to the formation of the hydroxylated product at the distal position. Involved in the activation of the antitubercular drug thiacetazone (TAC). The chain is Hydroxymycolate synthase MmaA4 (mmaA4) from Mycobacterium tuberculosis (strain ATCC 25618 / H37Rv).